Here is a 191-residue protein sequence, read N- to C-terminus: Peptidyl-tRNA hydrolase (191 aa).

TRNA is bound at residue tyrosine 17. The Proton acceptor role is filled by histidine 22. TRNA contacts are provided by tyrosine 68, asparagine 70, and asparagine 116.

The protein belongs to the PTH family. Monomer.

It localises to the cytoplasm. The catalysed reaction is an N-acyl-L-alpha-aminoacyl-tRNA + H2O = an N-acyl-L-amino acid + a tRNA + H(+). Functionally, hydrolyzes ribosome-free peptidyl-tRNAs (with 1 or more amino acids incorporated), which drop off the ribosome during protein synthesis, or as a result of ribosome stalling. In terms of biological role, catalyzes the release of premature peptidyl moieties from peptidyl-tRNA molecules trapped in stalled 50S ribosomal subunits, and thus maintains levels of free tRNAs and 50S ribosomes. In Francisella tularensis subsp. holarctica (strain FTNF002-00 / FTA), this protein is Peptidyl-tRNA hydrolase.